Consider the following 99-residue polypeptide: A-type ATP synthase subunit F (99 aa).

It belongs to the V-ATPase F subunit family. As to quaternary structure, has multiple subunits with at least A(3), B(3), C, D, E, F, H, I and proteolipid K(x).

The protein localises to the cell membrane. Its function is as follows. Component of the A-type ATP synthase that produces ATP from ADP in the presence of a proton gradient across the membrane. The chain is A-type ATP synthase subunit F from Methanococcus maripaludis (strain C5 / ATCC BAA-1333).